Consider the following 233-residue polypeptide: 2,3,4,5-tetrahydropyridine-2,6-dicarboxylate N-acetyltransferase (233 aa).

Belongs to the transferase hexapeptide repeat family. DapH subfamily.

The catalysed reaction is (S)-2,3,4,5-tetrahydrodipicolinate + acetyl-CoA + H2O = L-2-acetamido-6-oxoheptanedioate + CoA. Its pathway is amino-acid biosynthesis; L-lysine biosynthesis via DAP pathway; LL-2,6-diaminopimelate from (S)-tetrahydrodipicolinate (acetylase route): step 1/3. Catalyzes the transfer of an acetyl group from acetyl-CoA to tetrahydrodipicolinate. The polypeptide is 2,3,4,5-tetrahydropyridine-2,6-dicarboxylate N-acetyltransferase (Leuconostoc mesenteroides subsp. mesenteroides (strain ATCC 8293 / DSM 20343 / BCRC 11652 / CCM 1803 / JCM 6124 / NCDO 523 / NBRC 100496 / NCIMB 8023 / NCTC 12954 / NRRL B-1118 / 37Y)).